The chain runs to 352 residues: Glycoprotein integral membrane protein 1 (352 aa).

Positions 1–25 (MASRCKIHLTVAYLLILCILASAQS) are cleaved as a signal peptide. Over 26–281 (KQMTTETVVL…KLRRFLSDSV (256 aa)) the chain is Extracellular. N-linked (GlcNAc...) asparagine glycans are attached at residues asparagine 36, asparagine 44, asparagine 89, asparagine 109, asparagine 151, and asparagine 197. Residues 206 to 245 (NSETTQEEIAAPGKLPETPLRMDPETLYESREEEERRSDS) form a disordered region. The segment covering 225–244 (LRMDPETLYESREEEERRSD) has biased composition (basic and acidic residues). Residues 282–302 (PLFFLVMWVVVVGVAGSAVVI) form a helical membrane-spanning segment. Residues 303–352 (KILDLIFPSCEHRGFFHLNPETLMPDDEKVSLIDNMEGDMTEKSILLIEK) lie on the Cytoplasmic side of the membrane.

It localises to the membrane. In Danio rerio (Zebrafish), this protein is Glycoprotein integral membrane protein 1 (ginm1).